Consider the following 67-residue polypeptide: Bombesin (67 aa).

An N-terminal signal peptide occupies residues 1 to 30 (MSLLPAVKVLPLGYLGIVLVFSLILRSAMV). Residues 31–49 (DFIQDAGKLERIDTYKREA) constitute a propeptide that is removed on maturation. Gln50 carries the post-translational modification Pyrrolidone carboxylic acid. Met64 is subject to Methionine amide.

It belongs to the bombesin/neuromedin-B/ranatensin family. As to expression, expressed by the skin dorsal glands.

Its subcellular location is the secreted. Its function is as follows. Stimulates smooth muscle contraction in isolated rat stomach strip. The polypeptide is Bombesin (Sanguirana varians (Palawan frog)).